A 156-amino-acid chain; its full sequence is Phosphopantetheine adenylyltransferase (156 aa).

T10 contacts substrate. ATP-binding positions include 10–11 (TF) and H18. 3 residues coordinate substrate: K42, L74, and R88. ATP contacts are provided by residues 89 to 91 (GIR), E99, and 124 to 130 (WAFISSS).

This sequence belongs to the bacterial CoaD family. As to quaternary structure, homohexamer. The cofactor is Mg(2+).

Its subcellular location is the cytoplasm. The enzyme catalyses (R)-4'-phosphopantetheine + ATP + H(+) = 3'-dephospho-CoA + diphosphate. It participates in cofactor biosynthesis; coenzyme A biosynthesis; CoA from (R)-pantothenate: step 4/5. In terms of biological role, reversibly transfers an adenylyl group from ATP to 4'-phosphopantetheine, yielding dephospho-CoA (dPCoA) and pyrophosphate. This is Phosphopantetheine adenylyltransferase from Hamiltonella defensa subsp. Acyrthosiphon pisum (strain 5AT).